Reading from the N-terminus, the 1047-residue chain is MASPTSTNPAHDHFETFVQAQLCQDVLSSFQGLCRALGVESGGGLPQYHKIKAQLNYWSAKSLWAKLDKRASQPAYQQGQACTNTKCLVVGAGPCGLRAAVELALLGARVVLVEKRTKFSRHNVLHLWPFTIHDLRALGAKKFYGRFCTGTLDHISIRQLQLLLLKVALLLGVEIHWGFTFTGLQPPPKKGSGWRARIQPSPPAQLASYEFDVLISAGGGKFVPEGFTIREMRGKLAIGITANFVNGRTVEETQVPEISGVARIYNQKFFQSLLKATGIDLENIVYYKDDTHYFVMTAKKQCLLRLGVLRQDLPETDQLLGKANVVPEALQQFARAAADFATQGKLGKLEFAQDARGRPDVAAFDFTSMMRSESSARIQEKHGARLLLGLVGDCLVEPFWPLGTGVARGFLAAFDAAWMVKRWAEGTGPLELLAERESLYQLLSQTSPENMHRNVAQYGLDPATRYPNLNLRAVTPNQVQDLYDIMDKEHARKKSDETDARKTTTGSAGTEELLHWCQEQTAGFPGVSVTDFSSSWADGRALCALVHRLQPGLLEPSELQGMSALEATAWALRVAEYELGIIPVLSAQAVVAGSDPLGLIAYLSHFHSAFKNTPHSSGLVSQPHGTPSAILFLGKLQRSLQRTRTKVEEETPCTEEPPVSEPSVPPALPSEHEEAGAEDVCELCGKRLYILERFCVDGHFFHRGCFCCRTCEATLRPGGYGQYPGDGYFYCLQHLPQEDQKEADNNGSPENQELPTPGDSTTQSGPSSPVPPVTEASPVPSPSQPARRLIRLSSVERLRLSSLNIIPDSGVEPPPKPPRSCLDLAQESLKSSFMGWGVLRAPQVPEAIEKGEEEEEEEEEEEEEEEELPPPLALEVEQSLLTLAKNSGDMTKYPTWRRTLMRRAKEEEMKRFCKAQAIQRRLNEIEAAMRELETEGMKLEVALRKESSSPEKQKKLWLEQLLQLIQKKNSLVTEEAELMITVQELDLEEKQRQLDHEFRGINREETLKTQADRLSEDRVLRKLLDVVNQRDALIQFQEERRLREMPV.

Residues 1–489 (MASPTSTNPA…QDLYDIMDKE (489 aa)) form a monooxygenase domain region. FAD is bound by residues C95, 114 to 116 (EKR), 121 to 123 (RHN), F181, Y293, and D393. T475 carries the phosphothreonine modification. Residues 507-611 (SAGTEELLHW…YLSHFHSAFK (105 aa)) form the Calponin-homology (CH) domain. S616 carries the phosphoserine modification. The disordered stretch occupies residues 644-672 (RTKVEEETPCTEEPPVSEPSVPPALPSEH). Over residues 659 to 668 (VSEPSVPPAL) the composition is skewed to pro residues. The LIM zinc-binding domain maps to 679 to 741 (DVCELCGKRL…LQHLPQEDQK (63 aa)). Zn(2+) is bound by residues C681, C684, H702, C705, C708, C711, C731, and H734. Disordered regions lie at residues 739–787 (DQKE…QPAR) and 849–872 (EKGE…PPPL). The segment covering 745 to 767 (NNGSPENQELPTPGDSTTQSGPS) has biased composition (polar residues). Residues S777 and S781 each carry the phosphoserine modification. The segment covering 851–868 (GEEEEEEEEEEEEEEEEL) has biased composition (acidic residues). The bMERB domain occupies 905 to 1047 (KEEEMKRFCK…EERRLREMPV (143 aa)). Positions 912-996 (FCKAQAIQRR…LEEKQRQLDH (85 aa)) form a coiled coil.

This sequence belongs to the Mical family. Interacts with STK38 and STK38L. Associates with the SH3 domain of NEDD9. Interacts with VIM and PLXNA3. Interacts with RAB1B, RAB8A, RAB10, RAB13 and RAB15 (in their GTP-bound forms); binding to RAB1B is of low affinity compared to other Rab proteins; at least in case of RAB8A and RAB10 can bind 2 molecules of the Rab proteins simultaneously. Interacts with GRAF1/ARHGAP26, GRAF2/ARHGAP10, RAB8A, RAB8B and RAB10; may bind simultaneously to GRAFs and Rabs and connects GRAFs to Rabs. Does not interact with RAB1 and RAB11A. FAD serves as cofactor.

The protein localises to the cytoplasm. It localises to the cytoskeleton. The protein resides in the endosome membrane. Its subcellular location is the midbody. It catalyses the reaction L-methionyl-[F-actin] + NADPH + O2 + H(+) = L-methionyl-(R)-S-oxide-[F-actin] + NADP(+) + H2O. The enzyme catalyses NADPH + O2 + H(+) = H2O2 + NADP(+). In terms of biological role, monooxygenase that promotes depolymerization of F-actin by mediating oxidation of specific methionine residues on actin to form methionine-sulfoxide, resulting in actin filament disassembly and preventing repolymerization. In the absence of actin, it also functions as a NADPH oxidase producing H(2)O(2). Acts as a cytoskeletal regulator that connects NEDD9 to intermediate filaments. Also acts as a negative regulator of apoptosis via its interaction with STK38 and STK38L; acts by antagonizing STK38 and STK38L activation by MST1/STK4. Involved in regulation of lamina-specific connectivity in the nervous system such as the development of lamina-restricted hippocampal connections. Through redox regulation of the actin cytoskeleton controls the intracellular distribution of secretory vesicles containing L1/neurofascin/NgCAM family proteins in neurons, thereby regulating their cell surface levels. May act as Rab effector protein and play a role in vesicle trafficking. Promotes endosomal tubule extension by associating with RAB8 (RAB8A or RAB8B), RAB10 and GRAF (GRAF1/ARHGAP26 or GRAF2/ARHGAP10) on the endosomal membrane which may connect GRAFs to Rabs, thereby participating in neosynthesized Rab8-Rab10-Rab11-dependent protein export. This Rattus norvegicus (Rat) protein is [F-actin]-monooxygenase MICAL1 (Mical1).